The chain runs to 81 residues: Photosystem I iron-sulfur center (81 aa).

2 4Fe-4S ferredoxin-type domains span residues 2 to 31 and 37 to 68; these read SHSV…MVPW and GQIA…VRVY. [4Fe-4S] cluster contacts are provided by Cys11, Cys14, Cys17, Cys21, Cys48, Cys51, Cys54, and Cys58.

The cyanobacterial PSI reaction center is composed of one copy each of PsaA,B,C,D,E,F,I,J,K,L,M and X, and forms trimeric complexes. Requires [4Fe-4S] cluster as cofactor.

Its subcellular location is the cellular thylakoid membrane. It carries out the reaction reduced [plastocyanin] + hnu + oxidized [2Fe-2S]-[ferredoxin] = oxidized [plastocyanin] + reduced [2Fe-2S]-[ferredoxin]. Its function is as follows. Apoprotein for the two 4Fe-4S centers FA and FB of photosystem I (PSI); essential for photochemical activity. FB is the terminal electron acceptor of PSI, donating electrons to ferredoxin. The C-terminus interacts with PsaA/B/D and helps assemble the protein into the PSI complex. Required for binding of PsaD and PsaE to PSI. PSI is a plastocyanin/cytochrome c6-ferredoxin oxidoreductase, converting photonic excitation into a charge separation, which transfers an electron from the donor P700 chlorophyll pair to the spectroscopically characterized acceptors A0, A1, FX, FA and FB in turn. The polypeptide is Photosystem I iron-sulfur center (Prochlorococcus marinus (strain SARG / CCMP1375 / SS120)).